The chain runs to 411 residues: Arginine deiminase (411 aa).

The Amidino-cysteine intermediate role is filled by Cys401.

The protein belongs to the arginine deiminase family.

The protein resides in the cytoplasm. It catalyses the reaction L-arginine + H2O = L-citrulline + NH4(+). It functions in the pathway amino-acid degradation; L-arginine degradation via ADI pathway; carbamoyl phosphate from L-arginine: step 1/2. This is Arginine deiminase from Staphylococcus aureus (strain MRSA252).